The sequence spans 83 residues: Small ribosomal subunit protein bS16 (83 aa).

This sequence belongs to the bacterial ribosomal protein bS16 family.

The polypeptide is Small ribosomal subunit protein bS16 (Polaromonas sp. (strain JS666 / ATCC BAA-500)).